Consider the following 174-residue polypeptide: NADH-quinone oxidoreductase subunit I (174 aa).

4Fe-4S ferredoxin-type domains are found at residues leucine 61–alanine 91 and isoleucine 103–glutamate 132. [4Fe-4S] cluster contacts are provided by cysteine 71, cysteine 74, cysteine 77, cysteine 81, cysteine 112, cysteine 115, cysteine 118, and cysteine 122.

This sequence belongs to the complex I 23 kDa subunit family. In terms of assembly, NDH-1 is composed of 14 different subunits. Subunits NuoA, H, J, K, L, M, N constitute the membrane sector of the complex. [4Fe-4S] cluster is required as a cofactor.

Its subcellular location is the cell inner membrane. It catalyses the reaction a quinone + NADH + 5 H(+)(in) = a quinol + NAD(+) + 4 H(+)(out). In terms of biological role, NDH-1 shuttles electrons from NADH, via FMN and iron-sulfur (Fe-S) centers, to quinones in the respiratory chain. The immediate electron acceptor for the enzyme in this species is believed to be ubiquinone. Couples the redox reaction to proton translocation (for every two electrons transferred, four hydrogen ions are translocated across the cytoplasmic membrane), and thus conserves the redox energy in a proton gradient. The polypeptide is NADH-quinone oxidoreductase subunit I (Bdellovibrio bacteriovorus (strain ATCC 15356 / DSM 50701 / NCIMB 9529 / HD100)).